We begin with the raw amino-acid sequence, 688 residues long: Glycine--tRNA ligase beta subunit (688 aa).

The protein belongs to the class-II aminoacyl-tRNA synthetase family. Tetramer of two alpha and two beta subunits.

Its subcellular location is the cytoplasm. The catalysed reaction is tRNA(Gly) + glycine + ATP = glycyl-tRNA(Gly) + AMP + diphosphate. The sequence is that of Glycine--tRNA ligase beta subunit from Geotalea uraniireducens (strain Rf4) (Geobacter uraniireducens).